Here is a 189-residue protein sequence, read N- to C-terminus: MKELKIIVINNYGQFCHLIHRTVRDLDMDTKIVANTTSVEDILDEEPDGIILSGGPSMERVGSCQEYVESIDIPILGICLGHQLIAQTFGGHTGAGKLGGYAAIDVEVIEEDDILKGLGPRTSVWASHADEVTVLPDEFIHLARSDVCEIEAMRHEERPIYGVQWHPEVAHTDKGEELFMNFFKVCEDY.

The 185-residue stretch at 5–189 (KIIVINNYGQ…MNFFKVCEDY (185 aa)) folds into the Glutamine amidotransferase type-1 domain. Cysteine 79 (nucleophile) is an active-site residue. Active-site residues include histidine 166 and glutamate 168.

In terms of assembly, heterodimer composed of a glutamine amidotransferase subunit (A) and a GMP-binding subunit (B).

It carries out the reaction XMP + L-glutamine + ATP + H2O = GMP + L-glutamate + AMP + diphosphate + 2 H(+). The protein operates within purine metabolism; GMP biosynthesis; GMP from XMP (L-Gln route): step 1/1. Its function is as follows. Catalyzes the synthesis of GMP from XMP. The sequence is that of GMP synthase [glutamine-hydrolyzing] subunit A from Methanococcoides burtonii (strain DSM 6242 / NBRC 107633 / OCM 468 / ACE-M).